The following is a 94-amino-acid chain: Co-chaperonin GroES (94 aa).

Belongs to the GroES chaperonin family. In terms of assembly, heptamer of 7 subunits arranged in a ring. Interacts with the chaperonin GroEL.

The protein resides in the cytoplasm. In terms of biological role, together with the chaperonin GroEL, plays an essential role in assisting protein folding. The GroEL-GroES system forms a nano-cage that allows encapsulation of the non-native substrate proteins and provides a physical environment optimized to promote and accelerate protein folding. GroES binds to the apical surface of the GroEL ring, thereby capping the opening of the GroEL channel. In Pediococcus pentosaceus (strain ATCC 25745 / CCUG 21536 / LMG 10740 / 183-1w), this protein is Co-chaperonin GroES.